We begin with the raw amino-acid sequence, 576 residues long: Polyphenol oxidase 3 (576 aa).

Residues His-61, His-85, His-94, His-259, His-263, and His-296 each contribute to the Cu cation site. Residues 83–85 constitute a cross-link (2'-(S-cysteinyl)-histidine (Cys-His)); sequence CTH. His-263 is a binding site for substrate. Positions 393–576 are cleaved as a propeptide — removed in mature form; sequence FVTTQTENPA…ILDDIIHRVN (184 aa).

It belongs to the tyrosinase family. As to quaternary structure, tetramer composed of two subunits of PPO3 (H subunits) and two subunits of the as yet uncharacterized product of ORF239342 (L subunits). It depends on Cu(2+) as a cofactor. In terms of processing, the C-ter is probably cleaved after Gly-392 since the mature active protein is smaller than the protein encoded by the gene.

It catalyses the reaction 2 L-dopa + O2 = 2 L-dopaquinone + 2 H2O. The catalysed reaction is L-tyrosine + O2 = L-dopaquinone + H2O. Copper-containing oxidase that catalyzes both the o-hydroxylation of monophenols and the subsequent oxidation of the resulting o-diphenols into reactive o-quinones, which evolve spontaneously to produce intermediates, which associate in dark brown pigments. Involved in the initial step of melanin synthesis. Melanins constitute a mechanism of defense and resistance to stress such as UV radiations, free radicals, gamma rays, dehydratation and extreme temperatures, and contribute to the fungal cell-wall resistance against hydrolytic enzymes in avoiding cellular lysis. Fungal pigments are also involved in the formation and stability of spores. This chain is Polyphenol oxidase 3 (PPO3), found in Agaricus bisporus (White button mushroom).